Consider the following 432-residue polypeptide: Putative cyclin-F1-4 (432 aa).

It belongs to the cyclin family. Cyclin F subfamily.

The chain is Putative cyclin-F1-4 (CycF1-4) from Oryza sativa subsp. japonica (Rice).